Consider the following 114-residue polypeptide: Ribonuclease P protein component (114 aa).

The protein belongs to the RnpA family. In terms of assembly, consists of a catalytic RNA component (M1 or rnpB) and a protein subunit.

It carries out the reaction Endonucleolytic cleavage of RNA, removing 5'-extranucleotides from tRNA precursor.. Functionally, RNaseP catalyzes the removal of the 5'-leader sequence from pre-tRNA to produce the mature 5'-terminus. It can also cleave other RNA substrates such as 4.5S RNA. The protein component plays an auxiliary but essential role in vivo by binding to the 5'-leader sequence and broadening the substrate specificity of the ribozyme. The polypeptide is Ribonuclease P protein component (Buchnera aphidicola subsp. Baizongia pistaciae (strain Bp)).